We begin with the raw amino-acid sequence, 424 residues long: Probable serine/threonine-protein kinase PBL15 (424 aa).

A Protein kinase domain is found at 99–380; the sequence is FSGNYLLGEG…AVVEALESLI (282 aa). Residues 105–113 and Lys134 contribute to the ATP site; that span reads LGEGGFGKV. A Phosphotyrosine modification is found at Tyr179. The active-site Proton acceptor is Asp229. A Phosphoserine modification is found at Ser233. Residues Thr264 and Thr269 each carry the phosphothreonine modification. Residue Tyr277 is modified to Phosphotyrosine. The interval 390 to 424 is disordered; it reads GHWPLSPKSQGGKVSPKVRGDHRSGRKSAPGSLRS.

Belongs to the protein kinase superfamily. Ser/Thr protein kinase family. In terms of assembly, interacts with the Xanthomonas campestris effector XopAC/AvrAC.

It is found in the cell membrane. The catalysed reaction is L-seryl-[protein] + ATP = O-phospho-L-seryl-[protein] + ADP + H(+). It carries out the reaction L-threonyl-[protein] + ATP = O-phospho-L-threonyl-[protein] + ADP + H(+). Its function is as follows. May be involved in plant defense signaling. In Arabidopsis thaliana (Mouse-ear cress), this protein is Probable serine/threonine-protein kinase PBL15.